The chain runs to 266 residues: UPF0294 protein YafD (266 aa).

The protein belongs to the UPF0294 family.

It localises to the cytoplasm. The protein is UPF0294 protein YafD of Salmonella typhi.